Here is a 268-residue protein sequence, read N- to C-terminus: UPF0354 protein OB2234 (268 aa).

Belongs to the UPF0354 family.

The protein is UPF0354 protein OB2234 of Oceanobacillus iheyensis (strain DSM 14371 / CIP 107618 / JCM 11309 / KCTC 3954 / HTE831).